The sequence spans 472 residues: Glutamate--tRNA ligase (472 aa).

The 'HIGH' region signature appears at 8-18; that stretch reads PSPTGFLHIGS. A 'KMSKS' region motif is present at residues 239 to 243; sequence KLSKR. Lys242 is an ATP binding site.

The protein belongs to the class-I aminoacyl-tRNA synthetase family. Glutamate--tRNA ligase type 1 subfamily. As to quaternary structure, monomer.

It localises to the cytoplasm. The catalysed reaction is tRNA(Glu) + L-glutamate + ATP = L-glutamyl-tRNA(Glu) + AMP + diphosphate. Functionally, catalyzes the attachment of glutamate to tRNA(Glu) in a two-step reaction: glutamate is first activated by ATP to form Glu-AMP and then transferred to the acceptor end of tRNA(Glu). The polypeptide is Glutamate--tRNA ligase (Solibacter usitatus (strain Ellin6076)).